The primary structure comprises 193 residues: Early light-induced protein 2, chloroplastic (193 aa).

A chloroplast-targeting transit peptide spans 1–43 (MATASFNMQSVFAAPSGVLTTRNIRNTNQLFFKRIAPVGVRCM). The disordered stretch occupies residues 46-80 (GDPIKEDPSVPSTSTSATPPQMPQSPPPPVSKPKV). The segment covering 54–64 (SVPSTSTSATP) has biased composition (low complexity). Residues 65 to 76 (PQMPQSPPPPVS) show a composition bias toward pro residues. 3 helical membrane passes run 102–122 (LAMV…ENVF), 129–149 (GVGW…VPLF), and 173–193 (FAML…GTLV).

Belongs to the ELIP/psbS family.

The protein localises to the plastid. It is found in the chloroplast thylakoid membrane. In terms of biological role, probably involved in the integration of pigments into the mature light-harvesting pigment-protein complexes. Light-harvesting chlorophyll (LHC) a/b-binding protein required to ensure a high rate of chlorophyll accumulation during deetiolation in continuous high light. Involved in seed germination. May fulfill a photoprotective functions. Prevents excess accumulation of free chlorophyll by inhibiting the entire chlorophyll biosynthesis pathway (e.g. 5-aminolevulinate synthesis and Mg-protoporphyrin IX chelatase activity), and hence prevent photooxidative stress. This Arabidopsis thaliana (Mouse-ear cress) protein is Early light-induced protein 2, chloroplastic.